Here is a 132-residue protein sequence, read N- to C-terminus: Translation initiation factor 5A (132 aa).

K36 carries the post-translational modification Hypusine.

The protein belongs to the eIF-5A family.

The protein localises to the cytoplasm. Functionally, functions by promoting the formation of the first peptide bond. This chain is Translation initiation factor 5A (eIF5A), found in Pyrobaculum arsenaticum (strain DSM 13514 / JCM 11321 / PZ6).